A 317-amino-acid polypeptide reads, in one-letter code: tRNA N6-adenosine threonylcarbamoyltransferase (317 aa).

H110 and H114 together coordinate Fe cation. Substrate-binding positions include 132–136, D165, G178, D182, and N271; that span reads VVSGG. D300 is a Fe cation binding site.

The protein belongs to the KAE1 / TsaD family. It depends on Fe(2+) as a cofactor.

It is found in the cytoplasm. It carries out the reaction L-threonylcarbamoyladenylate + adenosine(37) in tRNA = N(6)-L-threonylcarbamoyladenosine(37) in tRNA + AMP + H(+). In terms of biological role, required for the formation of a threonylcarbamoyl group on adenosine at position 37 (t(6)A37) in tRNAs that read codons beginning with adenine. Is involved in the transfer of the threonylcarbamoyl moiety of threonylcarbamoyl-AMP (TC-AMP) to the N6 group of A37, together with TsaE and TsaB. TsaD likely plays a direct catalytic role in this reaction. This chain is tRNA N6-adenosine threonylcarbamoyltransferase, found in Mesoplasma florum (strain ATCC 33453 / NBRC 100688 / NCTC 11704 / L1) (Acholeplasma florum).